The following is a 1888-amino-acid chain: Tensin-1 (1888 aa).

Over residues 21–31 the composition is skewed to pro residues; it reads PQPPGTPPGPA. Positions 21 to 45 are disordered; sequence PQPPGTPPGPARPERCEPGGAAPDP. The Phorbol-ester/DAG-type zinc-finger motif lies at 61–108; that stretch reads THHFKVKAFKKVKPCGICRQAITREGCVCKVCSFSCHRKCQAKVAAPC. The segment at 132–174 is disordered; that stretch reads GEGDCRVGSSPKNLEEGGSMRVSPSIQPQPQSQPTSLSRNTSV. Over residues 154–167 the composition is skewed to low complexity; that stretch reads SPSIQPQPQSQPTS. Residues 175-347 form the Phosphatase tensin-type domain; sequence SRAMEDSCEL…HYFSGLLSGS (173 aa). The C2 tensin-type domain occupies 352–478; it reads NKPLFLHHVI…GKVEFVFSYG (127 aa). Phosphoserine is present on residues Ser509 and Ser535. At Tyr537 the chain carries Phosphotyrosine. Disordered stretches follow at residues 543 to 608, 696 to 722, and 789 to 854; these read KDSL…PQEK, VTNT…YSTE, and RSQS…SAET. The residue at position 549 (Ser549) is a Phosphoserine. A compositionally biased stretch (polar residues) spans 571 to 584; sequence LSVSSDSGNSTAST. Residue Ser604 is modified to Phosphoserine. Ser792 is modified (phosphoserine). Over residues 835–852 the composition is skewed to polar residues; it reads RSPLQSLARSKPSPQLSA. Ser867 carries the post-translational modification Phosphoserine. 2 disordered regions span residues 893-1077 and 1109-1555; these read PLHK…RSPV and EEME…AGSL. The span at 905–922 shows a compositional bias: low complexity; it reads PGASPLSSQPLLGSSRQS. Ser930, Ser935, and Ser952 each carry phosphoserine. The segment covering 962 to 986 has biased composition (polar residues); it reads GSNQSFHPKSPASSTFLPSPHSSAG. A Phosphothreonine modification is found at Thr1015. Ser1054 carries the post-translational modification Phosphoserine. Over residues 1057-1069 the composition is skewed to polar residues; sequence QYENQSPEATSPR. Phosphotyrosine is present on Tyr1058. 3 positions are modified to phosphoserine: Ser1062, Ser1118, and Ser1122. Positions 1169–1179 are enriched in basic and acidic residues; the sequence is EVTKPPEEPRS. Low complexity predominate over residues 1227-1239; the sequence is SPSPLSTSSPILS. Polar residues predominate over residues 1240–1257; the sequence is ADSTSVGSFPSVVSSDQG. Ser1279 carries the phosphoserine modification. Positions 1284–1300 are enriched in low complexity; that stretch reads SYQSSSPVPVGGSSYNS. Polar residues predominate over residues 1301 to 1322; sequence PDYSLQPFSSSPESQGQPQYSA. Ser1321 carries O-linked (GalNAc...) serine glycosylation. Ser1331 is subject to Phosphoserine. Residue Thr1343 is modified to Phosphothreonine. At Ser1346 the chain carries Phosphoserine. Thr1420 carries the post-translational modification Phosphothreonine. Ser1423 bears the Phosphoserine mark. A compositionally biased stretch (polar residues) spans 1436 to 1446; that stretch reads NLASSLHSNAV. Ser1448, Ser1463, and Ser1468 each carry phosphoserine. Positions 1490 to 1507 are enriched in polar residues; the sequence is LSRQSSASGYQAPSTPSF. Residues 1518-1530 show a composition bias toward low complexity; sequence SSPATSPSPDSAA. Phosphoserine is present on residues Ser1535, Ser1547, Ser1554, and Ser1599. The 110-residue stretch at 1616-1725 folds into the SH2 domain; sequence WYKPEISREQ…ALPCKLVIPS (110 aa). Ser1741 carries the post-translational modification Phosphoserine. The PTB domain occupies 1751–1885; the sequence is ACNVLFVNSV…FVSKVMLSAG (135 aa).

The protein belongs to the PTEN phosphatase protein family. In terms of assembly, binds to actin filaments and interacts with phosphotyrosine-containing proteins. Interacts with STARD8. Interacts with protein phosphatase PPP1CA. Interacts (via N-terminus) with Rho GTPase-activating protein DLC1; the interaction is decreased by phosphorylation of TNS1. Interacts with tyrosine-phosphorylated proteins BCAR1/p130Cas and PTK2/FAK; the interactions are increased by phosphorylation of TNS1. In terms of processing, extensively phosphorylated on serine and threonine residues in a p38 MAPK-dependent manner which reduces interaction with DLC1 and increases interaction with tyrosine-phosphorylated proteins including BCAR1/p130cas and PTK2/FAK. The majority of the phosphorylated Ser/Thr residues are immediately adjacent to a proline residue. Also phosphorylated on tyrosine residues. Post-translationally, rapidly cleaved by calpain II.

The protein resides in the cell surface. It localises to the cell junction. The protein localises to the focal adhesion. Its subcellular location is the cytoplasm. It is found in the cytoskeleton. May act as a protein phosphatase and/or a lipid phosphatase. Involved in fibrillar adhesion formation. Essential for myofibroblast differentiation and myofibroblast-mediated extracellular matrix deposition. Enhances RHOA activation in the presence of DLC1. Plays a role in cell polarization and migration. May be involved in cartilage development and in linking signal transduction pathways to the cytoskeleton. The sequence is that of Tensin-1 from Mus musculus (Mouse).